Here is an 855-residue protein sequence, read N- to C-terminus: MLKEKYSFKEVENKYNILWEDSRVYKWDGKKENTFTIDTPPPTISGKLHIGHIFSYCHTDFIARFQRMLGKDIFYPIGFDDNGLPTERLVEQTYKTRAREVGREKFIEMCHEVIEKSKQEFKELLRSVGISYDWSLEYHTISKETVTLSQMSFIDLYNKGYAYRKMQPILWDPVDKTAIAQAEIEDKVCESSLNTITFSTEENEQIDIATTRPELFLACVAVFCHPEDARYAHLIGKTSVVPIIGVKVPIIADGRVKIDKGTGLVMCCTFGDELDIYWQQKHNLPMKIIIDQDGKINLDSMYDNNRSQYQGIGMTGERSTGVIKEGAISPHYDVIPVRNTRIYDEINGLKVKEARKKIIKILTERGLLTGSTNISHSVKCAERSGVSLEILPTYQWFIKTLDQKAQVLDKVKECNWYPSTMRKRMEVWIEGLNWDWCISRQRYFGVPFPVWYSRRKGEEGKVILAEVEDLPVDPLKDLPKGYSKEEVVPDQDVMDTWATSAITPQLSALAVNSEFSLPDHRYNTIFPADLRSQSHEIIRTWAFYTILKAYYHANSLPWKNIMVSGWCLADDKKKMSKSKGNIITPKSILDTYGADVVRYWTANSRLGVDTVYSENILKIGKRLVTKLWNASKFVSIFMERYQAVSINSVSETMDQWILSKLYKVIEKATNNLLQFEYCEALGAVEGFFWKDFCDNYLELAKKRAYGDKVSSKANLSAKQSLTYVLNTILRLLAPFLPYITEQIYHQLYSDNSVHNRGNWPNKEELIYDKHSEEMGDKFMQILNLVRKIKADNNVSVKHLIKKLMIKANVKEDKLNQSAQNDLQTVCNAEMIEWSENAQAGLITENGKFIVSIDLY.

Residues Pro42 to His52 carry the 'HIGH' region motif. The 'KMSKS' region signature appears at Lys574–Ser578. ATP is bound at residue Lys577.

The protein belongs to the class-I aminoacyl-tRNA synthetase family. ValS type 2 subfamily. In terms of assembly, monomer.

It is found in the cytoplasm. The enzyme catalyses tRNA(Val) + L-valine + ATP = L-valyl-tRNA(Val) + AMP + diphosphate. Catalyzes the attachment of valine to tRNA(Val). As ValRS can inadvertently accommodate and process structurally similar amino acids such as threonine, to avoid such errors, it has a 'posttransfer' editing activity that hydrolyzes mischarged Thr-tRNA(Val) in a tRNA-dependent manner. In Wolbachia sp. subsp. Brugia malayi (strain TRS), this protein is Valine--tRNA ligase.